Reading from the N-terminus, the 125-residue chain is Small ribosomal subunit protein uS13 (125 aa).

The tract at residues 92 to 125 (RRSLPVRGQNTQTNARTRKGKRKTVAGKKKAARK) is disordered. Basic residues predominate over residues 107-125 (RTRKGKRKTVAGKKKAARK).

Belongs to the universal ribosomal protein uS13 family. As to quaternary structure, part of the 30S ribosomal subunit. Forms a loose heterodimer with protein S19. Forms two bridges to the 50S subunit in the 70S ribosome.

Located at the top of the head of the 30S subunit, it contacts several helices of the 16S rRNA. In the 70S ribosome it contacts the 23S rRNA (bridge B1a) and protein L5 of the 50S subunit (bridge B1b), connecting the 2 subunits; these bridges are implicated in subunit movement. Contacts the tRNAs in the A and P-sites. In Chlorobium luteolum (strain DSM 273 / BCRC 81028 / 2530) (Pelodictyon luteolum), this protein is Small ribosomal subunit protein uS13.